Reading from the N-terminus, the 996-residue chain is PDZ domain-containing protein C23G3.12c (996 aa).

Residues 1-35 are disordered; it reads MSIKKRARAGSKSDDIGNKTPKKNGIEHEATKSSE. 3 PDZ domains span residues 280-358, 745-827, and 860-930; these read SRLG…QRGS, EFRA…LREG, and RAVR…STFD. The interval 972–996 is disordered; sequence KNPSMGFTIDEEVDDNTFDTEGEQQ. Over residues 980 to 996 the composition is skewed to acidic residues; it reads IDEEVDDNTFDTEGEQQ.

It belongs to the peptidase S1C family.

In Schizosaccharomyces pombe (strain 972 / ATCC 24843) (Fission yeast), this protein is PDZ domain-containing protein C23G3.12c.